The sequence spans 1404 residues: ABC transporter G family member 47 (1404 aa).

An ABC transporter 1 domain is found at 156 to 423 (GNALHITRKK…FQSIGFKCPE (268 aa)). 189–196 (GPPGSGKT) serves as a coordination point for ATP. Residues 501–714 (ELLQANIDRE…ALNTLAVNEF (214 aa)) form the ABC transmembrane type-2 1 domain. 7 helical membrane-spanning segments follow: residues 519 to 539 (FLYI…MTVF), 565 to 585 (MIMF…PVFF), 607 to 627 (TPIS…VIGF), 638 to 658 (FLAL…IASL), 663 to 683 (VVAS…SGFI), 692 to 712 (WWIW…LAVN), and 751 to 771 (VGAL…CLIF). The ABC transporter 2 domain occupies 808-1059 (ITFEDIKYSI…ELIRYFEAIE (252 aa)). Residue 852 to 859 (GVSGAGKT) participates in ATP binding. An ABC transmembrane type-2 2 domain is found at 1132–1346 (TQCLACLWKQ…TLNGLVTSQF (215 aa)). Transmembrane regions (helical) follow at residues 1152–1172 (IAVK…MFWG), 1183–1199 (LFSA…TMGV), 1239–1259 (LPYI…MIGY), 1266–1286 (FFWY…YGMM), 1298–1318 (TVVS…LIPL), 1321–1341 (IPIW…LNGL), and 1373–1393 (LLWV…FLFG).

Belongs to the ABC transporter superfamily. ABCG family. PDR (TC 3.A.1.205) subfamily.

It localises to the membrane. Its function is as follows. May be a general defense protein. This is ABC transporter G family member 47 from Oryza sativa subsp. japonica (Rice).